The primary structure comprises 98 residues: Aspartyl/glutamyl-tRNA(Asn/Gln) amidotransferase subunit C (98 aa).

Residues 77 to 98 form a disordered region; that stretch reads NEAPNPEGDFFRVPQILNTDEE.

Belongs to the GatC family. In terms of assembly, heterotrimer of A, B and C subunits.

The enzyme catalyses L-glutamyl-tRNA(Gln) + L-glutamine + ATP + H2O = L-glutaminyl-tRNA(Gln) + L-glutamate + ADP + phosphate + H(+). It carries out the reaction L-aspartyl-tRNA(Asn) + L-glutamine + ATP + H2O = L-asparaginyl-tRNA(Asn) + L-glutamate + ADP + phosphate + 2 H(+). Allows the formation of correctly charged Asn-tRNA(Asn) or Gln-tRNA(Gln) through the transamidation of misacylated Asp-tRNA(Asn) or Glu-tRNA(Gln) in organisms which lack either or both of asparaginyl-tRNA or glutaminyl-tRNA synthetases. The reaction takes place in the presence of glutamine and ATP through an activated phospho-Asp-tRNA(Asn) or phospho-Glu-tRNA(Gln). This chain is Aspartyl/glutamyl-tRNA(Asn/Gln) amidotransferase subunit C, found in Crocosphaera subtropica (strain ATCC 51142 / BH68) (Cyanothece sp. (strain ATCC 51142)).